A 681-amino-acid chain; its full sequence is Calpain-C (681 aa).

Residues 18–331 (LWEDPDFPAV…FSTMEVVYLD (314 aa)) enclose the Calpain catalytic domain. The interval 332-481 (TETSNDEEML…ILGTGSFRLS (150 aa)) is domain III. The linker stretch occupies residues 482-514 (CLETQTMILLDPFPALKSTDAERCGGPKVKSVC). Positions 515 to 681 (QYEPVYMQLA…HDWIKSILSC (167 aa)) are domain IV. The EF-hand domain maps to 552 to 587 (ANIDICRQVIALQDRSGSGRITFQQFKTFMVNLKSW). Residues aspartate 565, serine 567, serine 569, and arginine 571 each contribute to the Ca(2+) site.

This sequence belongs to the peptidase C2 family. As to expression, localized to the salivary glands in the larva.

It localises to the cytoplasm. In terms of biological role, not known; does not seem to have protease activity. This Drosophila melanogaster (Fruit fly) protein is Calpain-C.